Reading from the N-terminus, the 629-residue chain is tRNA uridine 5-carboxymethylaminomethyl modification enzyme MnmG (629 aa).

Residue 13–18 participates in FAD binding; that stretch reads GGGHAG. 273–287 provides a ligand contact to NAD(+); the sequence is GPRYCPSIEDKIHRF.

It belongs to the MnmG family. In terms of assembly, homodimer. Heterotetramer of two MnmE and two MnmG subunits. It depends on FAD as a cofactor.

The protein resides in the cytoplasm. In terms of biological role, NAD-binding protein involved in the addition of a carboxymethylaminomethyl (cmnm) group at the wobble position (U34) of certain tRNAs, forming tRNA-cmnm(5)s(2)U34. In Shewanella baltica (strain OS155 / ATCC BAA-1091), this protein is tRNA uridine 5-carboxymethylaminomethyl modification enzyme MnmG.